Consider the following 412-residue polypeptide: MKIYLVGGAVRDALLGLPVKDRDWVVVGSTPQEMLDAGYQQVGRDFPVFLHPQTHEEYALARTERKSGSGYTGFTCYAAPDVTLEDDLKRRDLTINALAQDDNGEIIDPYNGLGDLQNRLLRHVSPAFGEDPLRVLRVARFAARYAHLGFRIADETLTLMREMTHAGELEHLTPERVWKETESALTTRNPQVFFQVLRDCGALRVLFPEIDALFGVPAPARWHPEIDTGIHTLMTLSMAAMLSPQVDVRFATLCHDLGKGLTPPELWPRHHGHGPAGVKLVEQLCQRLRVPNEIRDLARLVAEFHDLIHTFPMLNPKTIVKLFDSIDAWRKPQRVEQLALTSEADVRGRTGFESADYPQGRWLREAWEVAQSVPTKAVVEAGFKGVEIREELTRRRIAAVASWKEQRCPKPD.

Residues glycine 8 and arginine 11 each contribute to the ATP site. Residues glycine 8 and arginine 11 each coordinate CTP. Mg(2+)-binding residues include aspartate 21 and aspartate 23. Arginine 91, arginine 137, and arginine 140 together coordinate ATP. Residues arginine 91, arginine 137, and arginine 140 each coordinate CTP. Positions 228–329 (TGIHTLMTLS…VKLFDSIDAW (102 aa)) constitute an HD domain.

This sequence belongs to the tRNA nucleotidyltransferase/poly(A) polymerase family. Bacterial CCA-adding enzyme type 1 subfamily. As to quaternary structure, monomer. Can also form homodimers and oligomers. Requires Mg(2+) as cofactor. Ni(2+) serves as cofactor.

The catalysed reaction is a tRNA precursor + 2 CTP + ATP = a tRNA with a 3' CCA end + 3 diphosphate. The enzyme catalyses a tRNA with a 3' CCA end + 2 CTP + ATP = a tRNA with a 3' CCACCA end + 3 diphosphate. Functionally, catalyzes the addition and repair of the essential 3'-terminal CCA sequence in tRNAs without using a nucleic acid template. Adds these three nucleotides in the order of C, C, and A to the tRNA nucleotide-73, using CTP and ATP as substrates and producing inorganic pyrophosphate. tRNA 3'-terminal CCA addition is required both for tRNA processing and repair. Also involved in tRNA surveillance by mediating tandem CCA addition to generate a CCACCA at the 3' terminus of unstable tRNAs. While stable tRNAs receive only 3'-terminal CCA, unstable tRNAs are marked with CCACCA and rapidly degraded. This is Multifunctional CCA protein from Escherichia coli O8 (strain IAI1).